We begin with the raw amino-acid sequence, 233 residues long: MSELVKISKTQFENVFQCEFNDGTVRLCTKNLAPGFSVYGERLFKVEGVEYREWNAFRSKLGGAILKGLKQNPIVKGTKVLYLGAASGTTPSHVSDIVELEGKVYGVEFSPRVVREFLLVAQHRPNLFPILADARFPQYYRTLVEDVDVLYVDIAQPDETDIAIYNAKFFLKNGGYMMMAIKARSIDVTKEPTEIYEMEVNKLKENNFDVIQVIQLDPYDKDHAMVLAKYKGK.

S-adenosyl-L-methionine is bound by residues threonine 89–threonine 90, glutamate 108–phenylalanine 109, aspartate 133–alanine 134, and aspartate 153–glutamine 156.

Belongs to the methyltransferase superfamily. Fibrillarin family. Interacts with nop5. Component of box C/D small ribonucleoprotein (sRNP) particles that contain rpl7ae, FlpA and nop5, plus a guide RNA.

In terms of biological role, involved in pre-rRNA and tRNA processing. Utilizes the methyl donor S-adenosyl-L-methionine to catalyze the site-specific 2'-hydroxyl methylation of ribose moieties in rRNA and tRNA. Site specificity is provided by a guide RNA that base pairs with the substrate. Methylation occurs at a characteristic distance from the sequence involved in base pairing with the guide RNA. The polypeptide is Fibrillarin-like rRNA/tRNA 2'-O-methyltransferase (Sulfurisphaera tokodaii (strain DSM 16993 / JCM 10545 / NBRC 100140 / 7) (Sulfolobus tokodaii)).